The primary structure comprises 168 residues: Endoribonuclease YbeY (168 aa).

Zn(2+) contacts are provided by His127, His131, and His137.

This sequence belongs to the endoribonuclease YbeY family. It depends on Zn(2+) as a cofactor.

It is found in the cytoplasm. Single strand-specific metallo-endoribonuclease involved in late-stage 70S ribosome quality control and in maturation of the 3' terminus of the 16S rRNA. The chain is Endoribonuclease YbeY from Chromobacterium violaceum (strain ATCC 12472 / DSM 30191 / JCM 1249 / CCUG 213 / NBRC 12614 / NCIMB 9131 / NCTC 9757 / MK).